A 1228-amino-acid chain; its full sequence is Probable phospholipid-transporting ATPase 5 (1228 aa).

At 1–74 (MARGRIRSKL…TTRYNLITFF (74 aa)) the chain is on the cytoplasmic side. A helical transmembrane segment spans residues 75–96 (PKSLYEQFHRAANLYFLVAAIL). Topologically, residues 97–100 (SVFP) are extracellular. Residues 101-123 (LSPFNKWSMIAPLVFVVGLSMLK) traverse the membrane as a helical segment. Residues 124-305 (EALEDWRRFM…SRIERTMDYI (182 aa)) are Cytoplasmic-facing. A helical membrane pass occupies residues 306 to 327 (IYTLLVLLILISCISSSGFAWE). At 328-359 (TEFHMPKMWYLRPGEPIDFTNPINPIYAGVVH) the chain is on the extracellular side. A helical membrane pass occupies residues 360–377 (LITALLLYGYLIPISLYV). Over 378 to 934 (SIEVVKVWQA…HGHWCYKRIA (557 aa)) the chain is Cytoplasmic. Aspartate 425 (4-aspartylphosphate intermediate) is an active-site residue. Lysine 616 participates in a covalent cross-link: Glycyl lysine isopeptide (Lys-Gly) (interchain with G-Cter in ubiquitin). Mg(2+) contacts are provided by aspartate 879 and aspartate 883. A helical transmembrane segment spans residues 935–954 (QMICYFFYKNIAFGLTLFYF). Over 955–968 (EAFTGFSGQSVYND) the chain is Extracellular. The chain crosses the membrane as a helical span at residues 969–988 (YYLLLFNVVLTSLPVIALGV). Residues 989–1018 (FEQDVSSEICLQFPALYQQGTKNLFFDWSR) lie on the Cytoplasmic side of the membrane. Residues 1019–1041 (ILGWMCNGVYASLVIFFLNIGII) form a helical membrane-spanning segment. Over 1042 to 1054 (YSQAFRDNGQTAD) the chain is Extracellular. A helical membrane pass occupies residues 1055–1077 (MDAVGTTMFTCIIWAANVQIALT). Residues 1078–1083 (MSHFTW) lie on the Cytoplasmic side of the membrane. Residues 1084-1104 (IQHVLIWGSIGMWYLFVAIYS) traverse the membrane as a helical segment. The Extracellular portion of the chain corresponds to 1105-1117 (MMPPSYSGNIYRI). The chain crosses the membrane as a helical span at residues 1118-1146 (LDEILAPAPIYWMATLLVTVAAVLPYVAH). The Cytoplasmic segment spans residues 1147 to 1228 (IAFQRFLNPL…AQDAMSPRSL (82 aa)).

This sequence belongs to the cation transport ATPase (P-type) (TC 3.A.3) family. Type IV subfamily.

The protein localises to the membrane. It catalyses the reaction ATP + H2O + phospholipidSide 1 = ADP + phosphate + phospholipidSide 2.. Functionally, involved in transport of phospholipids. The sequence is that of Probable phospholipid-transporting ATPase 5 from Arabidopsis thaliana (Mouse-ear cress).